A 371-amino-acid polypeptide reads, in one-letter code: 2-aminoethylphosphonate--pyruvate transaminase (371 aa).

The residue at position 195 (lysine 195) is an N6-(pyridoxal phosphate)lysine.

Belongs to the class-V pyridoxal-phosphate-dependent aminotransferase family. PhnW subfamily. In terms of assembly, homodimer. Pyridoxal 5'-phosphate is required as a cofactor.

The catalysed reaction is (2-aminoethyl)phosphonate + pyruvate = phosphonoacetaldehyde + L-alanine. Its function is as follows. Involved in phosphonate degradation. The protein is 2-aminoethylphosphonate--pyruvate transaminase of Pseudomonas aeruginosa (strain UCBPP-PA14).